Consider the following 527-residue polypeptide: Probable T-complex protein 1 subunit beta (527 aa).

The protein belongs to the TCP-1 chaperonin family. Heterooligomeric complex of about 850 to 900 kDa that forms two stacked rings, 12 to 16 nm in diameter.

The protein resides in the cytoplasm. Molecular chaperone; assists the folding of proteins upon ATP hydrolysis. Known to play a role, in vitro, in the folding of actin and tubulin. The chain is Probable T-complex protein 1 subunit beta (cct2) from Schizosaccharomyces pombe (strain 972 / ATCC 24843) (Fission yeast).